We begin with the raw amino-acid sequence, 240 residues long: DNA repair protein RecO (240 aa).

Belongs to the RecO family.

In terms of biological role, involved in DNA repair and RecF pathway recombination. The chain is DNA repair protein RecO from Xanthomonas euvesicatoria pv. vesicatoria (strain 85-10) (Xanthomonas campestris pv. vesicatoria).